We begin with the raw amino-acid sequence, 562 residues long: Arylsulfatase H (562 aa).

The Ca(2+) site is built by Asp15, Asp16, and Cys55. The Nucleophile role is filled by Cys55. Cys55 is modified (3-oxoalanine (Cys)). Lys115 serves as a coordination point for substrate. His117 is an active-site residue. The next 2 helical transmembrane spans lie at 167-187 (LWIS…PKYA) and 189-209 (WFVV…LFFI). His271 serves as a coordination point for substrate. Residues Asp323 and Asn324 each coordinate Ca(2+).

The protein belongs to the sulfatase family. Ca(2+) serves as cofactor. The conversion to 3-oxoalanine (also known as C-formylglycine, FGly), of a serine or cysteine residue in prokaryotes and of a cysteine residue in eukaryotes, is critical for catalytic activity.

The protein localises to the membrane. In Canis lupus familiaris (Dog), this protein is Arylsulfatase H (ARSH).